The chain runs to 224 residues: Myogenin (224 aa).

Phosphoserine; by CaMK2G occurs at positions 77 and 79. In terms of domain architecture, bHLH spans 81–132 (DRRRAATLREKRRLKKVNEAFEALKRSTLLNPNQRLPKVEILRSAIQYIERL). Thr87 carries the phosphothreonine; by CaMK2G modification.

Homodimer and heterodimer with E12; heterodimerization enhances MYOG DNA-binding and transcriptional activities. Interacts with SMARCA4/BRG1/BAF190A. Interacts (via C-terminal region) with SSRP1 and SUPT16H; the interaction is indicative of an interaction with the FACT complex. Interacts with CSRP3. Post-translationally, phosphorylated by CAMK2G on threonine and serine amino acids in a muscle activity-dependent manner. Phosphorylation of Thr-87 impairs both DNA-binding and trans-activation functions in contracting muscles.

The protein resides in the nucleus. In terms of biological role, acts as a transcriptional activator that promotes transcription of muscle-specific target genes and plays a role in muscle differentiation, cell cycle exit and muscle atrophy. Essential for the development of functional embryonic skeletal fiber muscle differentiation. However is dispensable for postnatal skeletal muscle growth; phosphorylation by CAMK2G inhibits its transcriptional activity in respons to muscle activity. Required for the recruitment of the FACT complex to muscle-specific promoter regions, thus promoting gene expression initiation. During terminal myoblast differentiation, plays a role as a strong activator of transcription at loci with an open chromatin structure previously initiated by MYOD1. Together with MYF5 and MYOD1, co-occupies muscle-specific gene promoter core regions during myogenesis. Also cooperates with myocyte-specific enhancer factor MEF2D and BRG1-dependent recruitment of SWI/SNF chromatin-remodeling enzymes to alter chromatin structure at myogenic late gene promoters. Facilitates cell cycle exit during terminal muscle differentiation through the up-regulation of miR-20a expression, which in turn represses genes involved in cell cycle progression. Binds to the E-box containing (E1) promoter region of the miR-20a gene. Also plays a role in preventing reversal of muscle cell differentiation. Contributes to the atrophy-related gene expression in adult denervated muscles. Induces fibroblasts to differentiate into myoblasts. This Homo sapiens (Human) protein is Myogenin (MYOG).